Consider the following 164-residue polypeptide: Cold-inducible RNA-binding protein (164 aa).

Residues glycine 6 to lysine 84 enclose the RRM domain. The disordered stretch occupies residues alanine 65 to glycine 164. The segment covering tyrosine 93–glycine 118 has biased composition (gly residues). A compositionally biased stretch (basic and acidic residues) spans serine 155–glycine 164.

As to quaternary structure, interacts with prmt1. Interacts with elavl1/elrA (via RRM3). Associates with ribosomes. Post-translationally, methylated on arginine residues within RGG motifs. Methylation by prmt1 promotes cytoplasmic accumulation.

The protein resides in the nucleus. Its subcellular location is the nucleoplasm. The protein localises to the cytoplasm. Its function is as follows. Cold-inducible mRNA binding protein. Acts cooperatively with elavl1/elrA to stabilize AU-rich element (ARE)-containing mRNAs by binding to them and inhibiting their deadenylation. Essential for embryonic gastrulation and neural development, acting to maintain the expression of a set of adhesion molecules, and cell movement during embryogenesis. Required for pronephros development. May play a role in hibernation. The protein is Cold-inducible RNA-binding protein of Aquarana catesbeiana (American bullfrog).